A 310-amino-acid polypeptide reads, in one-letter code: MRILFMGTPEFAASYLDFLIQKKFNVVAVISQKDKPRGRGQKLLPTPVKEVAQKYGIPVFQPSKLNEEGLEIIENYRPDIGIVVAYGRLLRKPFLDAIPLYNVHTSLLPKYRGPAPMQRAIENGERVTGVTIFKISEGMDEGDIALQRAFELEECEPFGSVYEKFIKYGTELLQEFLRNYPVTLTPQDHSKATYAPKIEKKDLYVDFSKPAVEVRNKIRAYDPTPGVRTFLNDIEVKLYGACEIESNSQENIEPGTVVRIEKQSGDGVIKTIDGLLHIKYIQFPGKNKITFLSAKNGGLIKEGMVFRNLD.

106 to 109 (SLLP) provides a ligand contact to (6S)-5,6,7,8-tetrahydrofolate.

It belongs to the Fmt family.

The enzyme catalyses L-methionyl-tRNA(fMet) + (6R)-10-formyltetrahydrofolate = N-formyl-L-methionyl-tRNA(fMet) + (6S)-5,6,7,8-tetrahydrofolate + H(+). In terms of biological role, attaches a formyl group to the free amino group of methionyl-tRNA(fMet). The formyl group appears to play a dual role in the initiator identity of N-formylmethionyl-tRNA by promoting its recognition by IF2 and preventing the misappropriation of this tRNA by the elongation apparatus. The protein is Methionyl-tRNA formyltransferase of Fervidobacterium nodosum (strain ATCC 35602 / DSM 5306 / Rt17-B1).